The primary structure comprises 1205 residues: Chromosome partition protein Smc (1205 aa).

An ATP-binding site is contributed by 32 to 39 (PNGSGKSN). Coiled coils occupy residues 169–288 (KHRK…SIQH) and 330–499 (EELE…GLQR). Positions 514 to 628 (GLFGSIAQLV…VNDLTEAMGL (115 aa)) constitute an SMC hinge domain. Coiled-coil stretches lie at residues 661–771 (LEVT…AQET), 802–836 (AVRT…RAQQ), and 979–1033 (DRVT…KDLL).

The protein belongs to the SMC family. As to quaternary structure, homodimer.

The protein resides in the cytoplasm. Required for chromosome condensation and partitioning. In Mycobacterium tuberculosis (strain ATCC 25618 / H37Rv), this protein is Chromosome partition protein Smc.